Here is a 429-residue protein sequence, read N- to C-terminus: Histidine--tRNA ligase (429 aa).

The protein belongs to the class-II aminoacyl-tRNA synthetase family. Homodimer.

Its subcellular location is the cytoplasm. The enzyme catalyses tRNA(His) + L-histidine + ATP = L-histidyl-tRNA(His) + AMP + diphosphate + H(+). The chain is Histidine--tRNA ligase from Pseudomonas putida (strain W619).